The chain runs to 344 residues: Succinylglutamate desuccinylase (344 aa).

Zn(2+) is bound by residues H63, E66, and H160. E224 is an active-site residue.

This sequence belongs to the AspA/AstE family. Succinylglutamate desuccinylase subfamily. The cofactor is Zn(2+).

The catalysed reaction is N-succinyl-L-glutamate + H2O = L-glutamate + succinate. It functions in the pathway amino-acid degradation; L-arginine degradation via AST pathway; L-glutamate and succinate from L-arginine: step 5/5. In terms of biological role, transforms N(2)-succinylglutamate into succinate and glutamate. This Shewanella putrefaciens (strain CN-32 / ATCC BAA-453) protein is Succinylglutamate desuccinylase.